The primary structure comprises 103 residues: Small ribosomal subunit protein uS10 (103 aa).

It belongs to the universal ribosomal protein uS10 family. As to quaternary structure, part of the 30S ribosomal subunit.

Its function is as follows. Involved in the binding of tRNA to the ribosomes. This Chlorobium luteolum (strain DSM 273 / BCRC 81028 / 2530) (Pelodictyon luteolum) protein is Small ribosomal subunit protein uS10.